The following is a 321-amino-acid chain: MIFIYAIIALLITFILVPILIPTLKRMKFGQSIREEGPQSHMKKTGTPTMGGLTFLISIIISSIIAIIFVDHSNPIILLLFVTIGFGLIGFIDDYIIVVKKNNQGLTSKQKFLAQIIIAVIFFVLSDVFHLVHFTTDLHIPFVNFDIPLSFAYVIFIVFWQVGFSNAVNLTDGLDGLATGLSIIGFAMYAVMSYMLDSPAIGIFCIIMIFALLGFLPYNLNPAKVFMGDTGSLALGGIFATISIMLNQELSLILIGFVFVVETLSVMLQVASYKLTKKRIFKMSPIHHHFELSGWGEWKVVTVFWTVGLITGLIGLWIGVH.

Helical transmembrane passes span 1 to 21 (MIFI…PILI), 50 to 70 (MGGL…IIFV), 76 to 96 (IILL…DDYI), 112 to 132 (FLAQ…FHLV), 140 to 160 (IPFV…IVFW), 176 to 196 (GLAT…SYML), 200 to 220 (AIGI…PYNL), 225 to 245 (VFMG…ISIM), 250 to 270 (LSLI…MLQV), and 300 to 320 (VVTV…WIGV).

It belongs to the glycosyltransferase 4 family. MraY subfamily. Mg(2+) is required as a cofactor.

The protein localises to the cell membrane. The catalysed reaction is UDP-N-acetyl-alpha-D-muramoyl-L-alanyl-gamma-D-glutamyl-L-lysyl-D-alanyl-D-alanine + di-trans,octa-cis-undecaprenyl phosphate = Mur2Ac(oyl-L-Ala-gamma-D-Glu-L-Lys-D-Ala-D-Ala)-di-trans,octa-cis-undecaprenyl diphosphate + UMP. It functions in the pathway cell wall biogenesis; peptidoglycan biosynthesis. In terms of biological role, catalyzes the initial step of the lipid cycle reactions in the biosynthesis of the cell wall peptidoglycan: transfers peptidoglycan precursor phospho-MurNAc-pentapeptide from UDP-MurNAc-pentapeptide onto the lipid carrier undecaprenyl phosphate, yielding undecaprenyl-pyrophosphoryl-MurNAc-pentapeptide, known as lipid I. The chain is Phospho-N-acetylmuramoyl-pentapeptide-transferase from Staphylococcus epidermidis (strain ATCC 12228 / FDA PCI 1200).